An 837-amino-acid chain; its full sequence is MLGRKIPGSGVLGAGAGMDRGRTGERLHAALAGLQELHFLRDKQSAMVHWALTLNRDQPDPSKQENVSKEELRLEATLSLLKQQLTRLRRQDVGLKTHLQQLDQQITELKLDVCKASTEHLESDSRPSSGFYELSDGGSGSLSNSCTSVYSESLSSSSQTSLLPLLSTSYASHGRSSCGQTGVSRRCSADESTAQSDAPRSGVKLGSSLIRTATARADRARQRPVSTGDLDRMIGPGFGAFKSTDVKSSTPCSSPQNPSVDPKYQSNLVSSNGTEVYRYPSPLHAVALQSPIFSCTSDQGSSVALDEMPEEETQNLNEESTISSSVGYINKLLQRSSSRVNLLSSIKRIETVSGTHEQIPRSQEMIYGSLNGPQLLGSLQQLSMPLENALETGKTSALNNNQKQMDPPCLGSNFKEVEVQMLHHGKHPESSLDLQKNNFPINNTAGKVGAESDNGASEKRSGHFPKDLSVVQKPVERKSSFTSGREGSRASCHDKSSIPQSEFVHAQFVPAGSQRVKVRQADKKTKSVKLRKKSSEKPSAKKQHQKPLSREFCTKNRTDLKQSGSCRGKVTYLEESQAQSCSDCSCNGLINSHCIQNNHQQIPSSKSTKSRKAPEPVYHPLDHAKKKPSSRKWPSSSEIPLPPTLHTQRSKEMLNSRKVAMVRSVSARPRSGHWGCPPPRALPHSLSTSSYFSYLESRYPAAPVSSRHPPRCESEFSEYSAECASLFHSTIAASSDGEMSDYTTNRFGDSESSQGSQTASESDSSLSLDEEDLLEEEEEDEGGLVWAQAAMGTTAAGFSLQQHHRSESAACRIKASRALKKKIRRFQPASLKVMTLV.

Residues 65–113 adopt a coiled-coil conformation; that stretch reads ENVSKEELRLEATLSLLKQQLTRLRRQDVGLKTHLQQLDQQITELKLDV. 5 disordered regions span residues 189–265, 424–497, 512–564, 600–649, and 738–782; these read ADES…PKYQ, HGKH…DKSS, GSQR…KQSG, QQIP…HTQR, and EMSD…EDEG. Composition is skewed to polar residues over residues 246–265 and 432–445; these read VKSSTPCSSPQNPSVDPKYQ and LDLQKNNFPINNTA. Basic and acidic residues-rich tracts occupy residues 456 to 466, 486 to 496, and 548 to 560; these read ASEKRSGHFPK, EGSRASCHDKS, and LSREFCTKNRTDL. A compositionally biased stretch (polar residues) spans 741 to 759; it reads DYTTNRFGDSESSQGSQTA. The span at 768 to 782 shows a compositional bias: acidic residues; sequence LDEEDLLEEEEEDEG. The PDZ-binding signature appears at 834-837; sequence MTLV.

The protein belongs to the dapper family. In terms of assembly, interacts with dvl2.

The protein resides in the cytoplasm. It localises to the late endosome. The protein localises to the nucleus. Its subcellular location is the cell membrane. Involved in regulation of intracellular signaling pathways during development. Specifically thought to play a role in canonical and/or non-canonical Wnt signaling pathways through interaction with DSH (Dishevelled) family proteins. Positive regulator of the Wnt signaling pathway which acts downstream of wnt1 indicative for non-canonical Wnt signaling. Also negatively regulates the Nodal signaling pathway, possibly by promoting the lysosomal degradation of Nodal receptors. Required for convergent extension movements in gastrulation. The polypeptide is Dapper homolog 2 (dact2) (Danio rerio (Zebrafish)).